Here is a 142-residue protein sequence, read N- to C-terminus: Large ribosomal subunit protein uL16 (142 aa).

The protein belongs to the universal ribosomal protein uL16 family. Part of the 50S ribosomal subunit.

In terms of biological role, binds 23S rRNA and is also seen to make contacts with the A and possibly P site tRNAs. The sequence is that of Large ribosomal subunit protein uL16 from Thermotoga maritima (strain ATCC 43589 / DSM 3109 / JCM 10099 / NBRC 100826 / MSB8).